The chain runs to 434 residues: GTPase Obg (434 aa).

The region spanning 1 to 158 (MFLDTAKIKV…RELQLELKIL (158 aa)) is the Obg domain. In terms of domain architecture, OBG-type G spans 159–336 (ADVGLVGFPS…LLDATAELLD (178 aa)). Residues 165 to 172 (GFPSVGKS), 190 to 194 (FTTIV), 212 to 215 (DLPG), 282 to 285 (NKMD), and 317 to 319 (SGL) contribute to the GTP site. The Mg(2+) site is built by Ser-172 and Thr-192. Residues 356–434 (GFDEEEKAFE…IGKFEFEFVD (79 aa)) enclose the OCT domain.

It belongs to the TRAFAC class OBG-HflX-like GTPase superfamily. OBG GTPase family. Monomer. Mg(2+) serves as cofactor.

It is found in the cytoplasm. Its function is as follows. An essential GTPase which binds GTP, GDP and possibly (p)ppGpp with moderate affinity, with high nucleotide exchange rates and a fairly low GTP hydrolysis rate. Plays a role in control of the cell cycle, stress response, ribosome biogenesis and in those bacteria that undergo differentiation, in morphogenesis control. In Streptococcus pneumoniae (strain Hungary19A-6), this protein is GTPase Obg.